The sequence spans 498 residues: Glutamate--tRNA ligase (498 aa).

The 'HIGH' region signature appears at 12-22; it reads PSPTGHLHIGN. The 'KMSKS' region signature appears at 259-263; it reads KLSKR. K262 contacts ATP.

It belongs to the class-I aminoacyl-tRNA synthetase family. Glutamate--tRNA ligase type 1 subfamily. As to quaternary structure, monomer.

It localises to the cytoplasm. The enzyme catalyses tRNA(Glu) + L-glutamate + ATP = L-glutamyl-tRNA(Glu) + AMP + diphosphate. Its function is as follows. Catalyzes the attachment of glutamate to tRNA(Glu) in a two-step reaction: glutamate is first activated by ATP to form Glu-AMP and then transferred to the acceptor end of tRNA(Glu). The chain is Glutamate--tRNA ligase from Limosilactobacillus fermentum (strain NBRC 3956 / LMG 18251) (Lactobacillus fermentum).